A 127-amino-acid polypeptide reads, in one-letter code: Calcitonin gene-related peptide 2 (127 aa).

A signal peptide spans M1 to A25. The propeptide occupies A26–Q79. C83 and C88 are disulfide-bonded. Phenylalanine amide is present on F118. Positions D124–A127 are excised as a propeptide.

This sequence belongs to the calcitonin family. Expressed in spinal cord, pituitary and thalamus.

The protein localises to the secreted. Functionally, CALCB/CGRP2 is a peptide hormone that induces vasodilation mediated by the CALCRL-RAMP1 receptor complex. Dilates a variety of vessels including the coronary, cerebral and systemic vasculature. Its abundance in the CNS also points toward a neurotransmitter or neuromodulator role. The sequence is that of Calcitonin gene-related peptide 2 from Homo sapiens (Human).